The chain runs to 264 residues: Probable glycerophosphodiester phosphodiesterase 2 (264 aa).

The region spanning 17–255 (RIAMAHRGFT…DRADLLRDVL (239 aa)) is the GP-PDE domain. The Proton acceptor role is filled by histidine 22. A divalent metal cation contacts are provided by glutamate 50, aspartate 52, and histidine 65. Histidine 65 functions as the Proton donor in the catalytic mechanism.

Belongs to the glycerophosphoryl diester phosphodiesterase family. A divalent metal cation is required as a cofactor.

The catalysed reaction is a sn-glycero-3-phosphodiester + H2O = an alcohol + sn-glycerol 3-phosphate + H(+). Its function is as follows. Glycerophosphodiester phosphodiesterase hydrolyzes glycerophosphodiesters into glycerol-3-phosphate (G3P) and the corresponding alcohol. This is Probable glycerophosphodiester phosphodiesterase 2 from Mycobacterium tuberculosis (strain ATCC 25618 / H37Rv).